The following is a 120-amino-acid chain: MMRKLKTLPPTLRDKNRYIAFEIISDGDFTKDEVKELIWKSSLEVLGETGTAIVKPWLIKFDPNTKTGIVRCDREYVEYLRFALMLVSEFNGKRLIIRTLGVSGTIKRLKRKFLAKYGWK.

Belongs to the eukaryotic/archaeal RNase P protein component 2 family. As to quaternary structure, homodimer in solution. Component of RNase P which consists of a catalytic RNA component and at least 5 protein subunits. Forms a heterotetrameric subcomplex with Rnp3. Reconstituted enzyme missing individual protein subunits is suboptimally active, showing each subunit contributes to optimization of activity.

It is found in the cytoplasm. It catalyses the reaction Endonucleolytic cleavage of RNA, removing 5'-extranucleotides from tRNA precursor.. In terms of biological role, part of ribonuclease P, a protein complex that generates mature tRNA molecules by cleaving their 5'-ends. In Pyrococcus horikoshii (strain ATCC 700860 / DSM 12428 / JCM 9974 / NBRC 100139 / OT-3), this protein is Ribonuclease P protein component 2.